Here is a 72-residue protein sequence, read N- to C-terminus: Protein kish (72 aa).

Positions 1–26 (MVAIFNFQSLLVVILLFICTCTYIRG) are cleaved as a signal peptide. Over 27–47 (SYPSLLEVRDKHSFSGLPRKA) the chain is Extracellular. The helical transmembrane segment at 48 to 68 (AIIGERLSPWVSACCLIMGLW) threads the bilayer. At 69–72 (TLYN) the chain is on the cytoplasmic side.

Belongs to the KISH family.

The protein resides in the golgi apparatus membrane. Its function is as follows. Involved in the early part of the secretory pathway. The protein is Protein kish (tmem167) of Dictyostelium discoideum (Social amoeba).